Here is a 309-residue protein sequence, read N- to C-terminus: uncharacterized protein (309 aa).

The tract at residues 272 to 291 is disordered; sequence PSLDAPSETVEAFPEPQKNL.

This is an uncharacterized protein from Bacillus subtilis (strain 168).